A 78-amino-acid chain; its full sequence is Small ribosomal subunit protein bS18 (78 aa).

Belongs to the bacterial ribosomal protein bS18 family. Part of the 30S ribosomal subunit. Forms a tight heterodimer with protein bS6.

Functionally, binds as a heterodimer with protein bS6 to the central domain of the 16S rRNA, where it helps stabilize the platform of the 30S subunit. The polypeptide is Small ribosomal subunit protein bS18 (Acidothermus cellulolyticus (strain ATCC 43068 / DSM 8971 / 11B)).